A 314-amino-acid polypeptide reads, in one-letter code: Small ribosomal subunit biogenesis GTPase RsgA (314 aa).

Residues 1 to 21 (MKRAPTKQPAKPAARGGERAQ) are disordered. Residues 85–246 (SDQFKSKLFA…LIDSPGFQEF (162 aa)) form the CP-type G domain. Residues 134–137 (NKID) and 188–196 (GQSGMGKST) each bind GTP. Positions 270, 275, 277, and 283 each coordinate Zn(2+).

It belongs to the TRAFAC class YlqF/YawG GTPase family. RsgA subfamily. In terms of assembly, monomer. Associates with 30S ribosomal subunit, binds 16S rRNA. Zn(2+) serves as cofactor.

Its subcellular location is the cytoplasm. Functionally, one of several proteins that assist in the late maturation steps of the functional core of the 30S ribosomal subunit. Helps release RbfA from mature subunits. May play a role in the assembly of ribosomal proteins into the subunit. Circularly permuted GTPase that catalyzes slow GTP hydrolysis, GTPase activity is stimulated by the 30S ribosomal subunit. The protein is Small ribosomal subunit biogenesis GTPase RsgA of Burkholderia pseudomallei (strain 1106a).